We begin with the raw amino-acid sequence, 95 residues long: MTLERSDVEKIAHLASLGLNEDDLPQTTAALNSILGLVDQMQAVNTDGIEPLAHPLEASQRLRADVVTESNNREAYQSIAPAVENGLYLVPKVID.

Belongs to the GatC family. As to quaternary structure, heterotrimer of A, B and C subunits.

The enzyme catalyses L-glutamyl-tRNA(Gln) + L-glutamine + ATP + H2O = L-glutaminyl-tRNA(Gln) + L-glutamate + ADP + phosphate + H(+). The catalysed reaction is L-aspartyl-tRNA(Asn) + L-glutamine + ATP + H2O = L-asparaginyl-tRNA(Asn) + L-glutamate + ADP + phosphate + 2 H(+). In terms of biological role, allows the formation of correctly charged Asn-tRNA(Asn) or Gln-tRNA(Gln) through the transamidation of misacylated Asp-tRNA(Asn) or Glu-tRNA(Gln) in organisms which lack either or both of asparaginyl-tRNA or glutaminyl-tRNA synthetases. The reaction takes place in the presence of glutamine and ATP through an activated phospho-Asp-tRNA(Asn) or phospho-Glu-tRNA(Gln). In Pseudomonas fluorescens (strain SBW25), this protein is Aspartyl/glutamyl-tRNA(Asn/Gln) amidotransferase subunit C.